We begin with the raw amino-acid sequence, 208 residues long: 3-demethoxyubiquinol 3-hydroxylase (208 aa).

Glutamate 57, glutamate 87, histidine 90, glutamate 139, glutamate 171, and histidine 174 together coordinate Fe cation.

This sequence belongs to the COQ7 family. Fe cation is required as a cofactor.

The protein localises to the cell membrane. The catalysed reaction is a 5-methoxy-2-methyl-3-(all-trans-polyprenyl)benzene-1,4-diol + AH2 + O2 = a 3-demethylubiquinol + A + H2O. It functions in the pathway cofactor biosynthesis; ubiquinone biosynthesis. In terms of biological role, catalyzes the hydroxylation of 2-nonaprenyl-3-methyl-6-methoxy-1,4-benzoquinol during ubiquinone biosynthesis. In Burkholderia lata (strain ATCC 17760 / DSM 23089 / LMG 22485 / NCIMB 9086 / R18194 / 383), this protein is 3-demethoxyubiquinol 3-hydroxylase.